A 717-amino-acid polypeptide reads, in one-letter code: F-box only protein 42 (717 aa).

Positions 1–30 are enriched in acidic residues; it reads MASSSDSEDDSVMAVDQEETALEGTMEQDE. Residues 1-34 are disordered; sequence MASSSDSEDDSVMAVDQEETALEGTMEQDEDPHP. Residues 44–93 enclose the F-box domain; sequence NRSMSELPEEVLEYILSFLSPYQEHKTAALVCKQWYRLIKGVAHQCYHGF. Kelch repeat units lie at residues 132–184, 186–242, 244–293, and 295–342; these read SMYV…VYKD, LVLF…VIGD, MIVF…VIDD, and TLLI…LWCH. The interval 361-452 is disordered; it reads RAPLSPSLNS…NLSPGTVAVG (92 aa). Residues 363-376 show a composition bias toward low complexity; the sequence is PLSPSLNSRPSPIS. Residues S365 and S373 each carry the phosphoserine modification. At T378 the chain carries Phosphothreonine. A compositionally biased stretch (polar residues) spans 416 to 426; sequence QRQTPSGSREG. Residue S552 is modified to Phosphoserine. A compositionally biased stretch (low complexity) spans 570-595; that stretch reads GPSASAALSPPLGSSPSSPGSQSLSS. The segment at 570 to 632 is disordered; that stretch reads GPSASAALSP…HHPPQSLNVG (63 aa).

As to quaternary structure, component of some SCF complex, composed of CUL1, SKP1, RBX1 and FBXO42. Interacts (via the kelch domain) with p53/TP53; interaction is direct.

Substrate-recognition component of some SCF (SKP1-CUL1-F-box protein)-type E3 ubiquitin ligase complex. Specifically recognizes p53/TP53, promoting its ubiquitination and degradation. This chain is F-box only protein 42 (Fbxo42), found in Mus musculus (Mouse).